Here is a 329-residue protein sequence, read N- to C-terminus: DNA-directed RNA polymerase subunit alpha (329 aa).

The segment at 1 to 235 (MQGSVTEFLK…EQLEAFVDLR (235 aa)) is alpha N-terminal domain (alpha-NTD). Residues 249–329 (FDPILLRPVD…NWPPASIADE (81 aa)) are alpha C-terminal domain (alpha-CTD).

This sequence belongs to the RNA polymerase alpha chain family. In terms of assembly, homodimer. The RNAP catalytic core consists of 2 alpha, 1 beta, 1 beta' and 1 omega subunit. When a sigma factor is associated with the core the holoenzyme is formed, which can initiate transcription.

The enzyme catalyses RNA(n) + a ribonucleoside 5'-triphosphate = RNA(n+1) + diphosphate. DNA-dependent RNA polymerase catalyzes the transcription of DNA into RNA using the four ribonucleoside triphosphates as substrates. This chain is DNA-directed RNA polymerase subunit alpha, found in Photorhabdus laumondii subsp. laumondii (strain DSM 15139 / CIP 105565 / TT01) (Photorhabdus luminescens subsp. laumondii).